The primary structure comprises 133 residues: Large-conductance mechanosensitive channel (133 aa).

Helical transmembrane passes span 17–37 and 73–93; these read AFIL…GGAF and IGSF…LYLA.

It belongs to the MscL family. As to quaternary structure, homopentamer.

Its subcellular location is the cell inner membrane. Its function is as follows. Channel that opens in response to stretch forces in the membrane lipid bilayer. May participate in the regulation of osmotic pressure changes within the cell. The protein is Large-conductance mechanosensitive channel of Synechococcus elongatus (strain ATCC 33912 / PCC 7942 / FACHB-805) (Anacystis nidulans R2).